The sequence spans 275 residues: S-methyl-5'-thioadenosine phosphorylase (275 aa).

Residues Ser20, 62–63 (RH), and 95–96 (SA) contribute to the phosphate site. Cystine bridges form between Cys143-Cys210, Cys205-Cys266, and Cys264-Cys267. Met195 is a binding site for substrate. Thr196 serves as a coordination point for phosphate. 219–221 (DYD) serves as a coordination point for substrate.

The protein belongs to the PNP/MTAP phosphorylase family. MTAP subfamily. Homohexamer. Dimer of a homotrimer.

The catalysed reaction is S-methyl-5'-thioadenosine + phosphate = 5-(methylsulfanyl)-alpha-D-ribose 1-phosphate + adenine. The protein operates within amino-acid biosynthesis; L-methionine biosynthesis via salvage pathway; S-methyl-5-thio-alpha-D-ribose 1-phosphate from S-methyl-5'-thioadenosine (phosphorylase route): step 1/1. Its function is as follows. Catalyzes the reversible phosphorylation of S-methyl-5'-thioadenosine (MTA) to adenine and 5-methylthioribose-1-phosphate. Involved in the breakdown of MTA, a major by-product of polyamine biosynthesis. Responsible for the first step in the methionine salvage pathway after MTA has been generated from S-adenosylmethionine. Has broad substrate specificity with 6-aminopurine nucleosides as preferred substrates. The sequence is that of S-methyl-5'-thioadenosine phosphorylase from Aeropyrum pernix (strain ATCC 700893 / DSM 11879 / JCM 9820 / NBRC 100138 / K1).